We begin with the raw amino-acid sequence, 725 residues long: ATP-dependent RNA helicase DRS1 (725 aa).

The segment at 14–184 is disordered; that stretch reads DFVPTISDSE…AEEKVEEDTA (171 aa). Acidic residues predominate over residues 21-33; the sequence is DSEEDVPDLDSDE. 2 stretches are compositionally biased toward basic and acidic residues: residues 85-95 and 107-116; these read EEKKDVDLDKI and HVDEAEKSES. Acidic residues-rich tracts occupy residues 117–127 and 139–184; these read EESESDDEDLA and PEGE…EDTA. The Q motif signature appears at 206 to 234; sequence KTFNDLALSRPVMKGLSNLGYVKPSPIQS. The region spanning 237–412 is the Helicase ATP-binding domain; that stretch reads IPIALLGKDI…SLSLKRPVRI (176 aa). 250–257 provides a ligand contact to ATP; that stretch reads AVTGSGKT. The short motif at 360-363 is the DEAD box element; the sequence is DEAD. The 191-residue stretch at 423–613 folds into the Helicase C-terminal domain; sequence KLTQEFVRIR…NMDQTVQDIL (191 aa). Residues 607–686 are a coiled coil; the sequence is QTVQDILVEE…KRKRNEAMED (80 aa). The segment at 646 to 725 is disordered; that stretch reads PKRTWFQSEK…KKKGKSKGKR (80 aa). Basic and acidic residues predominate over residues 669-707; it reads TKKEVNSKKRKRNEAMEDGHKRSYKKTQSDRTADQERTM. Positions 708–725 are enriched in basic residues; the sequence is KKQAKANGKKKGKSKGKR.

Belongs to the DEAD box helicase family. DDX27/DRS1 subfamily. Associates with pre-ribosomal particles.

Its subcellular location is the nucleus. The protein resides in the nucleolus. The catalysed reaction is ATP + H2O = ADP + phosphate + H(+). Its function is as follows. ATP-binding RNA helicase involved in ribosome assembly. The polypeptide is ATP-dependent RNA helicase DRS1 (DRS1) (Candida glabrata (strain ATCC 2001 / BCRC 20586 / JCM 3761 / NBRC 0622 / NRRL Y-65 / CBS 138) (Yeast)).